Consider the following 534-residue polypeptide: Cytokinin dehydrogenase 5 (534 aa).

Positions 1–20 (MAWCLVFMVFLIYCLISTVG) are cleaved as a signal peptide. The FAD-binding PCMH-type domain maps to 59-243 (TSAEPLAVFH…TRARIALEPA (185 aa)). Ala93, Gly95, and Gly97 together coordinate FAD. His98 carries the post-translational modification Pros-8alpha-FAD histidine. Residues Ser99 and Gln103 each contribute to the FAD site. N-linked (GlcNAc...) asparagine glycosylation is present at Asn152. 5 residues coordinate FAD: Asp167, Ser172, Ser178, Ile182, and Ile233. Residue Asn256 is glycosylated (N-linked (GlcNAc...) asparagine). Residues Tyr484 and Gln522 each contribute to the FAD site.

It belongs to the oxygen-dependent FAD-linked oxidoreductase family. In terms of assembly, monomer. Requires FAD as cofactor. In terms of tissue distribution, expressed in inflorescence meristems.

The protein resides in the secreted. It is found in the extracellular space. The enzyme catalyses N(6)-dimethylallyladenine + A + H2O = 3-methyl-2-butenal + adenine + AH2. In terms of biological role, catalyzes the oxidation of cytokinins, a family of N(6)-substituted adenine derivatives that are plant hormones, where the substituent is an isopentenyl group. In Oryza sativa subsp. japonica (Rice), this protein is Cytokinin dehydrogenase 5 (CKX5).